The following is a 1197-amino-acid chain: MNFEGLDPSLAEYAPTLHPALDPVLDPHLNPSLLQNVELDPEGVPLEGIAVPESVHIVEGMYSELHTAVSEVGVPVSVSHFDLHEEMLWVGNHGGHATSFFGPTLERYSSFQVNSSDDIRQIQSLESGVLFLTKTNLKCMSRGGLIIFDYLMDEAEDMHSLLLTDSSTLLVGGLQNHVIEIDLNTVQETQKYTVEVPGITIMRQSNRFFFCGHTSGKVSLRDLRTFVVEHEFDAYSGSLSDFDVHGNLLVTCGFSSRMNGLACDRFLKVYDLRMMRATTPLQVHIDPFFLRFIPTYTSRLAIISQTGQCQFCEPTGLANPADIFHVNTVGPLIMTFDVSASKQALAFGDSEGCVHLWADSPEVTFNTYSRETDFALPCIVDTLPHLDWNQDLVPLSLIPVPLTSETLLSDWPAANSAPAPRRAPPVDPEILRTMKKVGFIGYAPNPRTKLRNQIPYRLKEADNEFDSFSQVPESPIGREEEPHLYMVAKKYRKVTIKYSKLGLEDFDFKHYNKTLFAGLEPHIPNAYCNCMIQVLYFLEPVRCLVQNHLCQKEFCLGCELGLLFHMLDLSRGDPCQGSNFLRAFRTIPEASALGLILADSDEATGKVNLGRLIQSWNRFILTQLHQETQEQEGPQAYRGAGSSTFGSSGDSVIGQLFSCEVENCSMCRCGKETVRVSSTLLFTLSYPESAEKPVKDYEFAQILKRSICLEQNTQAWCENCEKYQPTVQTRNIRCLPDVLVINCEVNSSKEADFWKTQAEYAFQRALMKRGGFEITKGKEISLGDWKELGNPEVGHSYPSVEELKNIWIPHAIKMRLTKNKELDVCNWSESDELSPNDDPESVYVYDLMATVVHILDSRTGGSLVGHIKVGETYHQRKEGVTHQQWYLFNDFLIEPVDKCEAVQFDMSWKVPAILYYARRNLNSKYNLVIKNPIEASVLLAEASLARKQRKCHATFIPLMLSEMPQAGDLVGLDAEFVTLNEEEAELRSDGTKSTIKPSQMSVARITCVRGQGPNEGVPFIDDYISTQEQVVDYLTQYSGIKPGDLDAKISSKHLTTLKSTYLKLRFLIDVGVKFVGHGLQKDFRVINLMVPKDQVIDTVYLFHIPRKRMISLRFLAWYFLDLKIQGETHDSIEDARTALQLYRKYLELSQGGSEPDDFRKVLKALYEKGRKLDWKVPEPDSQSSPKHGAVFPPVLAL.

4 WD repeats span residues 153 to 193 (DEAE…QKYT), 195 to 231 (EVPG…VEHE), 244 to 280 (VHGN…ATTP), and 328 to 367 (TVGP…TFNT). The linker stretch occupies residues 368–485 (YSRETDFALP…IGREEEPHLY (118 aa)). The USP domain maps to 486–919 (MVAKKYRKVT…VPAILYYARR (434 aa)). Residues 970–1142 (VGLDAEFVTL…EDARTALQLY (173 aa)) form the Exonuclease domain. Positions 973, 975, 1082, and 1134 each coordinate a divalent metal cation. The interval 1176–1197 (VPEPDSQSSPKHGAVFPPVLAL) is disordered.

It belongs to the peptidase C19 family. PAN2 subfamily. In terms of assembly, forms a heterotrimer with an asymmetric homodimer of the regulatory subunit PAN3 to form the poly(A)-nuclease (PAN) deadenylation complex. Requires a divalent metal cation as cofactor.

The protein resides in the cytoplasm. Its subcellular location is the P-body. It is found in the nucleus. It carries out the reaction Exonucleolytic cleavage of poly(A) to 5'-AMP.. Positively regulated by the regulatory subunit PAN3. Catalytic subunit of the poly(A)-nuclease (PAN) deadenylation complex, one of two cytoplasmic mRNA deadenylases involved in general and miRNA-mediated mRNA turnover. PAN specifically shortens poly(A) tails of RNA and the activity is stimulated by poly(A)-binding protein (PABP). PAN deadenylation is followed by rapid degradation of the shortened mRNA tails by the CCR4-NOT complex. Deadenylated mRNAs are then degraded by two alternative mechanisms, namely exosome-mediated 3'-5' exonucleolytic degradation, or deadenylation-dependent mRNA decaping and subsequent 5'-3' exonucleolytic degradation by XRN1. The polypeptide is PAN2-PAN3 deadenylation complex catalytic subunit PAN2 (Gallus gallus (Chicken)).